The sequence spans 31 residues: Photosystem I reaction center subunit XII (31 aa).

Residues 7 to 26 form a helical membrane-spanning segment; the sequence is QVYVALVIALLPAVLAFRLS.

The protein belongs to the PsaM family.

The protein resides in the cellular thylakoid membrane. The chain is Photosystem I reaction center subunit XII from Thermosynechococcus vestitus (strain NIES-2133 / IAM M-273 / BP-1).